A 105-amino-acid chain; its full sequence is Large ribosomal subunit protein uL24 (105 aa).

Belongs to the universal ribosomal protein uL24 family. In terms of assembly, part of the 50S ribosomal subunit.

Its function is as follows. One of two assembly initiator proteins, it binds directly to the 5'-end of the 23S rRNA, where it nucleates assembly of the 50S subunit. In terms of biological role, one of the proteins that surrounds the polypeptide exit tunnel on the outside of the subunit. The polypeptide is Large ribosomal subunit protein uL24 (Psychrobacter sp. (strain PRwf-1)).